Reading from the N-terminus, the 383-residue chain is Anhydro-N-acetylmuramic acid kinase (383 aa).

9 to 16 contacts ATP; sequence GTSLDGID.

This sequence belongs to the anhydro-N-acetylmuramic acid kinase family.

It carries out the reaction 1,6-anhydro-N-acetyl-beta-muramate + ATP + H2O = N-acetyl-D-muramate 6-phosphate + ADP + H(+). It functions in the pathway amino-sugar metabolism; 1,6-anhydro-N-acetylmuramate degradation. It participates in cell wall biogenesis; peptidoglycan recycling. In terms of biological role, catalyzes the specific phosphorylation of 1,6-anhydro-N-acetylmuramic acid (anhMurNAc) with the simultaneous cleavage of the 1,6-anhydro ring, generating MurNAc-6-P. Is required for the utilization of anhMurNAc either imported from the medium or derived from its own cell wall murein, and thus plays a role in cell wall recycling. In Clostridioides difficile (strain 630) (Peptoclostridium difficile), this protein is Anhydro-N-acetylmuramic acid kinase.